A 326-amino-acid polypeptide reads, in one-letter code: N-acetyl-gamma-glutamyl-phosphate reductase (326 aa).

Cys155 is an active-site residue.

It belongs to the NAGSA dehydrogenase family. Type 1 subfamily.

It localises to the cytoplasm. It catalyses the reaction N-acetyl-L-glutamate 5-semialdehyde + phosphate + NADP(+) = N-acetyl-L-glutamyl 5-phosphate + NADPH + H(+). It participates in amino-acid biosynthesis; L-arginine biosynthesis; N(2)-acetyl-L-ornithine from L-glutamate: step 3/4. In terms of biological role, catalyzes the NADPH-dependent reduction of N-acetyl-5-glutamyl phosphate to yield N-acetyl-L-glutamate 5-semialdehyde. The chain is N-acetyl-gamma-glutamyl-phosphate reductase from Shewanella baltica (strain OS223).